A 584-amino-acid polypeptide reads, in one-letter code: Chaperonin GroEL 1 (584 aa).

ATP contacts are provided by residues threonine 29–proline 32, aspartate 86–threonine 90, glycine 413, and aspartate 492. Residues glutamate 523–glycine 542 form a disordered region. A compositionally biased stretch (gly residues) spans glycine 530–glycine 542.

This sequence belongs to the chaperonin (HSP60) family. In terms of assembly, forms a cylinder of 14 subunits composed of two heptameric rings stacked back-to-back. Interacts with the co-chaperonin GroES.

The protein localises to the cytoplasm. The catalysed reaction is ATP + H2O + a folded polypeptide = ADP + phosphate + an unfolded polypeptide.. Together with its co-chaperonin GroES, plays an essential role in assisting protein folding. The GroEL-GroES system forms a nano-cage that allows encapsulation of the non-native substrate proteins and provides a physical environment optimized to promote and accelerate protein folding. The chain is Chaperonin GroEL 1 from Prochlorococcus marinus (strain MIT 9312).